The sequence spans 515 residues: Fatty acyl-CoA reductase 1 (515 aa).

Over 1–465 (MLSIPEFYQG…ARKHLNKLRN (465 aa)) the chain is Cytoplasmic. A helical transmembrane segment spans residues 466-484 (IRYGFNTILVVLIWRVFIA). At 485–515 (RSQMARNIWYFVVSMCFKFLSYFRASSTMRY) the chain is on the peroxisomal side.

The protein belongs to the fatty acyl-CoA reductase family.

It is found in the peroxisome membrane. The catalysed reaction is a long-chain fatty acyl-CoA + 2 NADPH + 2 H(+) = a long-chain primary fatty alcohol + 2 NADP(+) + CoA. It catalyses the reaction hexadecanoyl-CoA + 2 NADPH + 2 H(+) = hexadecan-1-ol + 2 NADP(+) + CoA. It carries out the reaction octadecanoyl-CoA + 2 NADPH + 2 H(+) = octadecan-1-ol + 2 NADP(+) + CoA. The enzyme catalyses (9Z)-octadecenoyl-CoA + 2 NADPH + 2 H(+) = (9Z)-octadecen-1-ol + 2 NADP(+) + CoA. The catalysed reaction is (9Z,12Z)-octadecadienoyl-CoA + 2 NADPH + 2 H(+) = (9Z,12Z)-octadecadien-1-ol + 2 NADP(+) + CoA. It catalyses the reaction eicosanoyl-CoA + 2 NADPH + 2 H(+) = eicosan-1-ol + 2 NADP(+) + CoA. It carries out the reaction 16-methylheptadecanoyl-CoA + 2 NADPH + 2 H(+) = 16-methylheptadecan-1-ol + 2 NADP(+) + CoA. The enzyme catalyses 18-methylnonadecanoyl-CoA + 2 NADPH + 2 H(+) = 18-methylnonadecan-1-ol + 2 NADP(+) + CoA. Its function is as follows. Catalyzes the reduction of saturated and unsaturated C16 or C18 fatty acyl-CoA to fatty alcohols. It plays an essential role in the production of ether lipids/plasmalogens which synthesis requires fatty alcohols. In parallel, it is also required for wax monoesters production since fatty alcohols also constitute a substrate for their synthesis. This is Fatty acyl-CoA reductase 1 (far1) from Xenopus laevis (African clawed frog).